The chain runs to 381 residues: Chaperone protein DnaJ (381 aa).

The J domain maps to 5–70 (DFYEVLGVSR…QKKAAYDQYG (66 aa)). A CR-type zinc finger spans residues 136–214 (GVSKEIEVPT…CHGQGRKQKT (79 aa)). C149, C152, C166, C169, C188, C191, C202, and C205 together coordinate Zn(2+). CXXCXGXG motif repeat units lie at residues 149–156 (CDICDGSG), 166–173 (CGTCHGHG), 188–195 (CPTCNGKG), and 202–209 (CNSCHGQG).

This sequence belongs to the DnaJ family. As to quaternary structure, homodimer. Zn(2+) serves as cofactor.

It is found in the cytoplasm. Its function is as follows. Participates actively in the response to hyperosmotic and heat shock by preventing the aggregation of stress-denatured proteins and by disaggregating proteins, also in an autonomous, DnaK-independent fashion. Unfolded proteins bind initially to DnaJ; upon interaction with the DnaJ-bound protein, DnaK hydrolyzes its bound ATP, resulting in the formation of a stable complex. GrpE releases ADP from DnaK; ATP binding to DnaK triggers the release of the substrate protein, thus completing the reaction cycle. Several rounds of ATP-dependent interactions between DnaJ, DnaK and GrpE are required for fully efficient folding. Also involved, together with DnaK and GrpE, in the DNA replication of plasmids through activation of initiation proteins. The polypeptide is Chaperone protein DnaJ (Vibrio atlanticus (strain LGP32) (Vibrio splendidus (strain Mel32))).